The chain runs to 454 residues: Sensor histidine kinase RppB (454 aa).

Over 1–13 (MNTRRLFARSRLQ) the chain is Periplasmic. Residues 14–34 (LAFWYALVMGGILTLLGLGVY) traverse the membrane as a helical segment. The Cytoplasmic segment spans residues 35-186 (RAIVQANWMA…LAAFDAENKR (152 aa)). Residues 187 to 207 (ILWILGLSFPIALGLVAFSSW) traverse the membrane as a helical segment. Over 208 to 454 (GLAGLAMRPI…PIFSVPIVHS (247 aa)) the chain is Periplasmic. In terms of domain architecture, Histidine kinase spans 230–448 (NAAHELRSPL…LFTIQLPIFS (219 aa)). Phosphohistidine; by autocatalysis is present on histidine 233.

It is found in the cell inner membrane. The enzyme catalyses ATP + protein L-histidine = ADP + protein N-phospho-L-histidine.. Functionally, member of two-component regulatory system RppA/RppB, involved in the establishment of the appropriate stoichiometry between the 2 photosystems. It senses changes in the plastoquinone (PQ) redox poise. Another group shows this two-component pair, renamed NrsR/NrsS, controls the nickel-dependent expression of the nrsBACD operon; they suggest the photosystem-related activities seen earlier are due to the expression of NrsS (RppB) in the absence of its natural substrate NrsR (RppA). The chain is Sensor histidine kinase RppB from Synechocystis sp. (strain ATCC 27184 / PCC 6803 / Kazusa).